Reading from the N-terminus, the 285-residue chain is UDP-3-O-acyl-N-acetylglucosamine deacetylase (285 aa).

3 residues coordinate Zn(2+): His-89, His-243, and Asp-247. Residue His-270 is the Proton donor of the active site.

The protein belongs to the LpxC family. It depends on Zn(2+) as a cofactor.

The catalysed reaction is a UDP-3-O-[(3R)-3-hydroxyacyl]-N-acetyl-alpha-D-glucosamine + H2O = a UDP-3-O-[(3R)-3-hydroxyacyl]-alpha-D-glucosamine + acetate. Its pathway is glycolipid biosynthesis; lipid IV(A) biosynthesis; lipid IV(A) from (3R)-3-hydroxytetradecanoyl-[acyl-carrier-protein] and UDP-N-acetyl-alpha-D-glucosamine: step 2/6. Functionally, catalyzes the hydrolysis of UDP-3-O-myristoyl-N-acetylglucosamine to form UDP-3-O-myristoylglucosamine and acetate, the committed step in lipid A biosynthesis. This Thermosynechococcus vestitus (strain NIES-2133 / IAM M-273 / BP-1) protein is UDP-3-O-acyl-N-acetylglucosamine deacetylase.